The primary structure comprises 445 residues: Dihydroorotate dehydrogenase (quinone), mitochondrial (445 aa).

The N-terminal 16 residues, 1 to 16 (MNSGFPRILSKKLFTL), are a transit peptide targeting the mitochondrion. Residues 39-56 (LLKYTVGIAIGSFAGFYF) form a helical membrane-spanning segment. Residues 124-128 (AGLDK) and S148 contribute to the FMN site. Residue K128 coordinates substrate. 173–177 (NRYGF) contributes to the substrate binding site. 2 residues coordinate FMN: N221 and N251. 251-256 (NVSSPN) is a binding site for substrate. Catalysis depends on S254, which acts as the Nucleophile. Residues K302 and S330 each contribute to the FMN site. 331–332 (NT) contacts substrate. FMN-binding positions include G356, G386, and 407 to 408 (YT).

The protein belongs to the dihydroorotate dehydrogenase family. Type 2 subfamily. FMN is required as a cofactor.

Its subcellular location is the mitochondrion inner membrane. The catalysed reaction is (S)-dihydroorotate + a quinone = orotate + a quinol. It participates in pyrimidine metabolism; UMP biosynthesis via de novo pathway; orotate from (S)-dihydroorotate (quinone route): step 1/1. In terms of biological role, catalyzes the conversion of dihydroorotate to orotate with quinone as electron acceptor. In Kluyveromyces lactis (strain ATCC 8585 / CBS 2359 / DSM 70799 / NBRC 1267 / NRRL Y-1140 / WM37) (Yeast), this protein is Dihydroorotate dehydrogenase (quinone), mitochondrial (URA9).